The following is a 322-amino-acid chain: MKKIAVLTSGGDSPGMNAAVRAVTRTAIYNNIEVYGVYQGYQGLLDDDIHKLELGSVGDTIQRGGTFLFSARCPQFKEEDVRKKAIENLRKRGIEGLVVIGGDGSYRGAQRISEECKEIQTIGIPGTIDNDINGTDFTIGFDTALNTIIESVDKIRDTASSHARTFIVEVMGRDCGDLALWAGLSVGAETIVLPEVNTDIKDVAEKIEQGIKRGKKHSIVMVAEGCMSGQECADELTKYINIDTRVSVLGHIQRGGSPSGADRVLASRLGGYAVELLKQGETAKGVGIRNNQLTSTPFDEIFAESNRKFNSQMYELAKELSI.

Glycine 11 is an ATP binding site. An ADP-binding site is contributed by 21–25; sequence RAVTR. Residues 72 to 73 and 102 to 105 contribute to the ATP site; these read RC and GDGS. Position 103 (aspartate 103) interacts with Mg(2+). 127–129 contributes to the substrate binding site; the sequence is TID. The active-site Proton acceptor is the aspartate 129. An ADP-binding site is contributed by arginine 156. Substrate is bound by residues arginine 164 and 171–173; that span reads MGR. ADP-binding positions include 187 to 189, arginine 213, and 215 to 217; these read GAE and KKH. Residues glutamate 224, arginine 245, and 251–254 each bind substrate; that span reads HIQR.

Belongs to the phosphofructokinase type A (PFKA) family. ATP-dependent PFK group I subfamily. Prokaryotic clade 'B1' sub-subfamily. As to quaternary structure, homotetramer. Mg(2+) is required as a cofactor.

It localises to the cytoplasm. The catalysed reaction is beta-D-fructose 6-phosphate + ATP = beta-D-fructose 1,6-bisphosphate + ADP + H(+). The protein operates within carbohydrate degradation; glycolysis; D-glyceraldehyde 3-phosphate and glycerone phosphate from D-glucose: step 3/4. Its activity is regulated as follows. Allosterically activated by ADP and other diphosphonucleosides, and allosterically inhibited by phosphoenolpyruvate. In terms of biological role, catalyzes the phosphorylation of D-fructose 6-phosphate to fructose 1,6-bisphosphate by ATP, the first committing step of glycolysis. The protein is ATP-dependent 6-phosphofructokinase of Staphylococcus epidermidis (strain ATCC 35984 / DSM 28319 / BCRC 17069 / CCUG 31568 / BM 3577 / RP62A).